Here is a 356-residue protein sequence, read N- to C-terminus: Histidinol-phosphate aminotransferase (356 aa).

Residue Lys214 is modified to N6-(pyridoxal phosphate)lysine.

The protein belongs to the class-II pyridoxal-phosphate-dependent aminotransferase family. Histidinol-phosphate aminotransferase subfamily. Homodimer. Pyridoxal 5'-phosphate is required as a cofactor.

It carries out the reaction L-histidinol phosphate + 2-oxoglutarate = 3-(imidazol-4-yl)-2-oxopropyl phosphate + L-glutamate. Its pathway is amino-acid biosynthesis; L-histidine biosynthesis; L-histidine from 5-phospho-alpha-D-ribose 1-diphosphate: step 7/9. In Shigella sonnei (strain Ss046), this protein is Histidinol-phosphate aminotransferase.